The primary structure comprises 190 residues: Ribosome hibernation promotion factor (190 aa).

This sequence belongs to the HPF/YfiA ribosome-associated protein family. Long HPF subfamily. As to quaternary structure, interacts with 100S ribosomes.

It localises to the cytoplasm. Required for dimerization of active 70S ribosomes into 100S ribosomes in stationary phase; 100S ribosomes are translationally inactive and sometimes present during exponential growth. The polypeptide is Ribosome hibernation promotion factor (Staphylococcus saprophyticus subsp. saprophyticus (strain ATCC 15305 / DSM 20229 / NCIMB 8711 / NCTC 7292 / S-41)).